Consider the following 78-residue polypeptide: Defensin SD2 (78 aa).

The first 20 residues, 1-20 (MKSSMKMFAALLLVVMCLLA), serve as a signal peptide directing secretion. Cystine bridges form between Cys-34–Cys-78, Cys-45–Cys-65, Cys-51–Cys-72, and Cys-55–Cys-74.

It belongs to the DEFL family. Highest expression in flowers and to a lesser extent in leaves. Lower levels in hypocotyls. No expression in roots and cotyledons.

Its subcellular location is the secreted. The protein localises to the cell wall. Functionally, may play a protective role in flowers by protecting the reproductive organs from potential pathogen attack. In Helianthus annuus (Common sunflower), this protein is Defensin SD2 (SD2).